Reading from the N-terminus, the 180-residue chain is ADP-ribosylation factor 5 (180 aa).

Residue glycine 2 is the site of N-myristoyl glycine attachment. Residues 24-31, 67-71, and 126-129 each bind GTP; these read GLDAAGKT, DVGGQ, and NKQD.

It belongs to the small GTPase superfamily. Arf family. As to quaternary structure, interacts (when activated) with GGA1, GGA2 and GGA3; the interaction is required for proper subcellular location of GGA1, GGA2 and GGA3. Binds ASAP2. Interacts with NCS1/FREQ at the Golgi complex. Interacts with RAB11FIP3 and RAB11FIP4.

Its subcellular location is the golgi apparatus. It is found in the cytoplasm. The protein localises to the perinuclear region. It localises to the membrane. The protein resides in the trans-Golgi network membrane. GTP-binding protein involved in protein trafficking; may modulate vesicle budding and uncoating within the Golgi apparatus. In terms of biological role, (Microbial infection) Functions as an allosteric activator of the cholera toxin catalytic subunit, an ADP-ribosyltransferase. The protein is ADP-ribosylation factor 5 (ARF5) of Homo sapiens (Human).